The sequence spans 339 residues: Nicotinate-nucleotide--dimethylbenzimidazole phosphoribosyltransferase (339 aa).

E306 serves as the catalytic Proton acceptor.

It belongs to the CobT family.

It carries out the reaction 5,6-dimethylbenzimidazole + nicotinate beta-D-ribonucleotide = alpha-ribazole 5'-phosphate + nicotinate + H(+). Its pathway is nucleoside biosynthesis; alpha-ribazole biosynthesis; alpha-ribazole from 5,6-dimethylbenzimidazole: step 1/2. Functionally, catalyzes the synthesis of alpha-ribazole-5'-phosphate from nicotinate mononucleotide (NAMN) and 5,6-dimethylbenzimidazole (DMB). In Brucella canis (strain ATCC 23365 / NCTC 10854 / RM-666), this protein is Nicotinate-nucleotide--dimethylbenzimidazole phosphoribosyltransferase.